The primary structure comprises 378 residues: Ribosomal RNA large subunit methyltransferase G (378 aa).

The protein belongs to the methyltransferase superfamily. RlmG family.

The protein localises to the cytoplasm. The catalysed reaction is guanosine(1835) in 23S rRNA + S-adenosyl-L-methionine = N(2)-methylguanosine(1835) in 23S rRNA + S-adenosyl-L-homocysteine + H(+). Specifically methylates the guanine in position 1835 (m2G1835) of 23S rRNA. The protein is Ribosomal RNA large subunit methyltransferase G of Salmonella paratyphi A (strain ATCC 9150 / SARB42).